Here is a 231-residue protein sequence, read N- to C-terminus: Flagellar L-ring protein (231 aa).

Residues 1–18 (MNRFICVLALSGSAVLAG) form the signal peptide. Cys19 carries N-palmitoyl cysteine lipidation. Cys19 carries S-diacylglycerol cysteine lipidation.

It belongs to the FlgH family. The basal body constitutes a major portion of the flagellar organelle and consists of four rings (L,P,S, and M) mounted on a central rod.

It is found in the cell outer membrane. It localises to the bacterial flagellum basal body. In terms of biological role, assembles around the rod to form the L-ring and probably protects the motor/basal body from shearing forces during rotation. The polypeptide is Flagellar L-ring protein (Pseudomonas fluorescens (strain ATCC BAA-477 / NRRL B-23932 / Pf-5)).